A 509-amino-acid chain; its full sequence is Transmembrane protein 102 (509 aa).

At 1 to 312 (MASTVWGGAP…VLLATPEPPR (312 aa)) the chain is on the extracellular side. The interval 167–236 (PPVPEESDMT…NPETPEPLET (70 aa)) is disordered. Basic and acidic residues predominate over residues 174-204 (DMTHQTHSKESPTDRENSVDPSHDYVPEPEP). Over residues 207 to 224 (SLQKSSSDLSESQSSYKD) the composition is skewed to low complexity. The helical transmembrane segment at 313–329 (HLLLFDLIPVVTVTGWP) threads the bilayer. At 330 to 509 (DTARSHSWAG…GLAGVGGGTH (180 aa)) the chain is on the cytoplasmic side.

As to quaternary structure, interacts with CSF2RB; this interaction occurs preferentially in the absence of CSF2.

It is found in the cell membrane. In terms of biological role, selectively involved in CSF2 deprivation-induced apoptosis via a mitochondria-dependent pathway. This Mus musculus (Mouse) protein is Transmembrane protein 102 (Tmem102).